Here is a 100-residue protein sequence, read N- to C-terminus: Large ribosomal subunit protein uL23 (100 aa).

It belongs to the universal ribosomal protein uL23 family. As to quaternary structure, part of the 50S ribosomal subunit. Contacts protein L29, and trigger factor when it is bound to the ribosome.

One of the early assembly proteins it binds 23S rRNA. One of the proteins that surrounds the polypeptide exit tunnel on the outside of the ribosome. Forms the main docking site for trigger factor binding to the ribosome. The chain is Large ribosomal subunit protein uL23 from Thermotoga sp. (strain RQ2).